The sequence spans 367 residues: tRNA 2-selenouridine synthase (367 aa).

Residues 14-137 (FLNDVPLMDV…LRRFLIDSLE (124 aa)) enclose the Rhodanese domain. Catalysis depends on C97, which acts as the S-selanylcysteine intermediate.

It belongs to the SelU family. Monomer.

The enzyme catalyses 5-methylaminomethyl-2-thiouridine(34) in tRNA + selenophosphate + (2E)-geranyl diphosphate + H2O + H(+) = 5-methylaminomethyl-2-selenouridine(34) in tRNA + (2E)-thiogeraniol + phosphate + diphosphate. It carries out the reaction 5-methylaminomethyl-2-thiouridine(34) in tRNA + (2E)-geranyl diphosphate = 5-methylaminomethyl-S-(2E)-geranyl-thiouridine(34) in tRNA + diphosphate. It catalyses the reaction 5-methylaminomethyl-S-(2E)-geranyl-thiouridine(34) in tRNA + selenophosphate + H(+) = 5-methylaminomethyl-2-(Se-phospho)selenouridine(34) in tRNA + (2E)-thiogeraniol. The catalysed reaction is 5-methylaminomethyl-2-(Se-phospho)selenouridine(34) in tRNA + H2O = 5-methylaminomethyl-2-selenouridine(34) in tRNA + phosphate. Involved in the post-transcriptional modification of the uridine at the wobble position (U34) of tRNA(Lys), tRNA(Glu) and tRNA(Gln). Catalyzes the conversion of 2-thiouridine (S2U-RNA) to 2-selenouridine (Se2U-RNA). Acts in a two-step process involving geranylation of 2-thiouridine (S2U) to S-geranyl-2-thiouridine (geS2U) and subsequent selenation of the latter derivative to 2-selenouridine (Se2U) in the tRNA chain. This is tRNA 2-selenouridine synthase from Marinobacter nauticus (strain ATCC 700491 / DSM 11845 / VT8) (Marinobacter aquaeolei).